The following is a 214-amino-acid chain: Large ribosomal subunit protein uL1 (214 aa).

Belongs to the universal ribosomal protein uL1 family. As to quaternary structure, component of the large ribosomal subunit.

It is found in the cytoplasm. Functionally, component of the large ribosomal subunit. The ribosome is a large ribonucleoprotein complex responsible for the synthesis of proteins in the cell. In Entamoeba histolytica (strain ATCC 30459 / HM-1:IMSS / ABRM), this protein is Large ribosomal subunit protein uL1 (RPL10A).